The following is a 375-amino-acid chain: Ubl carboxyl-terminal hydrolase 18 (375 aa).

Residues glutamate 18 to proline 45 form a disordered region. Residues leucine 26–proline 45 show a composition bias toward basic and acidic residues. In terms of domain architecture, USP spans valine 55–methionine 373. Catalysis depends on cysteine 64, which acts as the Nucleophile. Catalysis depends on histidine 321, which acts as the Proton acceptor.

It belongs to the peptidase C19 family. As to quaternary structure, interacts with STAT2; the interaction is direct. Interacts with IFNAR2; indirectly via STAT2, it negatively regulates the assembly of the ternary interferon-IFNAR1-IFNAR2 complex and inhibits type I interferon signaling. Interacts with STING1. Interacts with USP20.

It carries out the reaction Thiol-dependent hydrolysis of ester, thioester, amide, peptide and isopeptide bonds formed by the C-terminal Gly of ubiquitin (a 76-residue protein attached to proteins as an intracellular targeting signal).. Functionally, interferon-induced ISG15-specific protease that plays a crucial role for maintaining a proper balance of ISG15-conjugated proteins in cells. Regulates protein ISGylation by efficiently cleaving ISG15 conjugates linked via isopeptide bonds. Regulates T-cell activation and T-helper 17 (Th17) cell differentiation by deubiquitinating TAK1, likely to keep TAK1-TAB complexes in steady conditions. In turn, restricts activation of NF-kappa-B, NFAT, and JNK as well as expression of IL2 in T-cells after TCR activation. Acts as a molecular adapter with USP20 to promote innate antiviral response through deubiquitinating STING1. Involved also in the negative regulation of the inflammatory response triggered by type I interferon. Upon recruitment by STAT2 to the type I interferon receptor subunit IFNAR2 interferes with the assembly of the ternary interferon-IFNAR1-IFNAR2 complex and acts as a negative regulator of the type I interferon signaling pathway. The protein is Ubl carboxyl-terminal hydrolase 18 (USP18) of Pongo abelii (Sumatran orangutan).